The primary structure comprises 331 residues: 2-hydroxyacid dehydrogenase homolog (331 aa).

NAD(+) is bound by residues 154–155 (KI), 232–234 (TSR), and D258. R234 is a catalytic residue. The active site involves E263. Catalysis depends on H295, which acts as the Proton donor. 295 to 298 (HQAF) serves as a coordination point for NAD(+).

Belongs to the D-isomer specific 2-hydroxyacid dehydrogenase family.

The chain is 2-hydroxyacid dehydrogenase homolog (ddh) from Haemophilus influenzae (strain ATCC 51907 / DSM 11121 / KW20 / Rd).